The primary structure comprises 359 residues: Transcription factor bHLH130 (359 aa).

The residue at position 60 (Ser-60) is a Phosphoserine. Residues 161 to 186 (EEDEESPSNSNGLRRHCSLSSRPPSS) are disordered. The span at 167–184 (PSNSNGLRRHCSLSSRPP) shows a compositional bias: polar residues. Residues 285-335 (CATHPRSIAERVRRTRISERMRKLQELVPNMDKQTNTSDMLDLAVDYIKDL) form the bHLH domain.

Homodimer.

Its subcellular location is the nucleus. The sequence is that of Transcription factor bHLH130 (BHLH130) from Arabidopsis thaliana (Mouse-ear cress).